We begin with the raw amino-acid sequence, 146 residues long: Nitric oxide reductase subunit C (146 aa).

The helical; Signal-anchor transmembrane segment at 13-29 (IYFGGSVFFILLFLALT) threads the bilayer. Cys61, Cys64, and His65 together coordinate heme c.

In terms of assembly, heterodimer of cytochromes b (large subunit) and c (small subunit).

The protein resides in the cell membrane. Component of the anaerobic respiratory chain that transforms nitrate to dinitrogen (denitrification). The sequence is that of Nitric oxide reductase subunit C (norC) from Pseudomonas aeruginosa (strain ATCC 15692 / DSM 22644 / CIP 104116 / JCM 14847 / LMG 12228 / 1C / PRS 101 / PAO1).